We begin with the raw amino-acid sequence, 63 residues long: Potassium channel toxin MeuTXKalpha4 (63 aa).

An N-terminal signal peptide occupies residues 1–28 (MSRLLIFILTAVVLSVIIDILNNSKVEG). Cystine bridges form between Cys-35–Cys-53, Cys-39–Cys-59, and Cys-43–Cys-61.

The protein belongs to the short scorpion toxin superfamily. Potassium channel inhibitor family. In terms of tissue distribution, expressed by the venom gland.

It is found in the secreted. Its function is as follows. May block voltage-gated potassium channels (Kv). This is Potassium channel toxin MeuTXKalpha4 from Mesobuthus eupeus (Lesser Asian scorpion).